The chain runs to 319 residues: Pectinesterase (319 aa).

At glutamine 1 the chain carries Pyrrolidone carboxylic acid. The substrate site is built by threonine 83 and glutamine 113. Aspartate 136 (proton donor) is an active-site residue. An intrachain disulfide couples cysteine 150 to cysteine 170. The Nucleophile role is filled by aspartate 157. The substrate site is built by arginine 225 and tryptophan 227.

It belongs to the pectinesterase family.

Its subcellular location is the secreted. The protein resides in the cell wall. The catalysed reaction is [(1-&gt;4)-alpha-D-galacturonosyl methyl ester](n) + n H2O = [(1-&gt;4)-alpha-D-galacturonosyl](n) + n methanol + n H(+). The protein operates within glycan metabolism; pectin degradation; 2-dehydro-3-deoxy-D-gluconate from pectin: step 1/5. Its function is as follows. Catalyzes the deesterification of methyl-esterified D-galactosiduronic acid units in pectic compounds. It participates in modulating cell wall during fruit ripening, cell wall extension during pollen germination, and in defense mechanisms against pathogens. This is Pectinesterase from Daucus carota (Wild carrot).